Reading from the N-terminus, the 187-residue chain is GTP cyclohydrolase 1 (187 aa).

Residues Cys-81, His-84, and Cys-152 each coordinate Zn(2+).

Belongs to the GTP cyclohydrolase I family. Toroid-shaped homodecamer, composed of two pentamers of five dimers.

The enzyme catalyses GTP + H2O = 7,8-dihydroneopterin 3'-triphosphate + formate + H(+). Its pathway is cofactor biosynthesis; 7,8-dihydroneopterin triphosphate biosynthesis; 7,8-dihydroneopterin triphosphate from GTP: step 1/1. This chain is GTP cyclohydrolase 1, found in Pyrobaculum aerophilum (strain ATCC 51768 / DSM 7523 / JCM 9630 / CIP 104966 / NBRC 100827 / IM2).